A 425-amino-acid polypeptide reads, in one-letter code: Glutamyl-tRNA reductase (425 aa).

Residues Thr49–Arg52, Ser107, Glu112–Gln114, and Gln118 each bind substrate. The active-site Nucleophile is Cys50. Gly187–Ile192 serves as a coordination point for NADP(+).

This sequence belongs to the glutamyl-tRNA reductase family. In terms of assembly, homodimer.

The catalysed reaction is (S)-4-amino-5-oxopentanoate + tRNA(Glu) + NADP(+) = L-glutamyl-tRNA(Glu) + NADPH + H(+). The protein operates within porphyrin-containing compound metabolism; protoporphyrin-IX biosynthesis; 5-aminolevulinate from L-glutamyl-tRNA(Glu): step 1/2. Its function is as follows. Catalyzes the NADPH-dependent reduction of glutamyl-tRNA(Glu) to glutamate 1-semialdehyde (GSA). This Pseudomonas entomophila (strain L48) protein is Glutamyl-tRNA reductase.